The primary structure comprises 188 residues: Proline-rich protein 3 (188 aa).

Positions 1–157 (MPKRKKQNQH…DPQVMEDKSD (157 aa)) are disordered. Pro residues-rich tracts occupy residues 35–46 (IGPPSLLGPPPM) and 69–82 (LIPP…PPWG). Over residues 83 to 96 (RGPIRRGLGPRSSP) the composition is skewed to low complexity. Over residues 145–157 (PKDDPQVMEDKSD) the composition is skewed to basic and acidic residues. A C3H1-type zinc finger spans residues 155–183 (KSDRPVCRHFAKKGHCRYEDLCAFYHPGV).

This Pan troglodytes (Chimpanzee) protein is Proline-rich protein 3 (PRR3).